Consider the following 344-residue polypeptide: tRNA N6-adenosine threonylcarbamoyltransferase (344 aa).

Fe cation-binding residues include His-112 and His-116. Residues 135–139 (LVSGG), Asp-168, Gly-181, and Asn-271 each bind substrate. Asp-299 is a Fe cation binding site. Residues 323–344 (RARPRWPLDPEAEPVRGAGVKA) are disordered.

The protein belongs to the KAE1 / TsaD family. Requires Fe(2+) as cofactor.

The protein resides in the cytoplasm. It carries out the reaction L-threonylcarbamoyladenylate + adenosine(37) in tRNA = N(6)-L-threonylcarbamoyladenosine(37) in tRNA + AMP + H(+). Its function is as follows. Required for the formation of a threonylcarbamoyl group on adenosine at position 37 (t(6)A37) in tRNAs that read codons beginning with adenine. Is involved in the transfer of the threonylcarbamoyl moiety of threonylcarbamoyl-AMP (TC-AMP) to the N6 group of A37, together with TsaE and TsaB. TsaD likely plays a direct catalytic role in this reaction. The chain is tRNA N6-adenosine threonylcarbamoyltransferase from Erythrobacter litoralis (strain HTCC2594).